A 78-amino-acid polypeptide reads, in one-letter code: Major outer membrane lipoprotein Lpp (78 aa).

An N-terminal signal peptide occupies residues 1 to 20; the sequence is MNRTKLVLGAVILGSTLLAG. Cysteine 21 carries N-palmitoyl cysteine lipidation. A lipid anchor (S-diacylglycerol cysteine) is attached at cysteine 21. Repeats lie at residues 24–34 and 38–48; these read NAKIDQLSSDV and NAKVDQLSNDV. A coiled-coil region spans residues 27–75; the sequence is IDQLSSDVQTLNAKVDQLSNDVNAIRSDVQAAKDDAARANQRLDNQVRT. The residue at position 78 (lysine 78) is an N6-murein peptidoglycan lysine.

It belongs to the Lpp family. As to quaternary structure, homotrimer.

The protein localises to the cell outer membrane. The protein resides in the secreted. It is found in the cell wall. Its function is as follows. A highly abundant outer membrane lipoprotein that controls the distance between the inner and outer membranes. The only protein known to be covalently linked to the peptidoglycan network (PGN). Also non-covalently binds the PGN. The link between the cell outer membrane and PGN contributes to maintenance of the structural and functional integrity of the cell envelope, and maintains the correct distance between the PGN and the outer membrane. This chain is Major outer membrane lipoprotein Lpp, found in Pectobacterium atrosepticum (strain SCRI 1043 / ATCC BAA-672) (Erwinia carotovora subsp. atroseptica).